The chain runs to 237 residues: Cytosolic-abundant heat soluble protein 86272 (237 aa).

The segment at 96–125 (FKDQEKYSREQAAIARAHDKDLEKKTEEYR) is disordered. Basic and acidic residues predominate over residues 111–125 (RAHDKDLEKKTEEYR). Positions 115–193 (KDLEKKTEEY…MNALEQSKMA (79 aa)) form a coiled coil. CAHS motif regions lie at residues 124–142 (YRKT…LEKQ) and 161–179 (QKRE…LEHE). Over residues 204 to 215 (AGTTVSGGTTVS) the composition is skewed to low complexity. The tract at residues 204 to 237 (AGTTVSGGTTVSEHTEVHDGKEKKSLGEKIKSLF) is disordered. Basic and acidic residues predominate over residues 216-237 (EHTEVHDGKEKKSLGEKIKSLF).

It belongs to the Cytosolic-abundant heat soluble protein (CAHS) family.

The protein resides in the cytoplasm. CAHS proteins are cytosolic heat soluble proteins that seem to contribute to the anhydrobiosis in tardigrades, but their specific mechanisms are yet to be identified. It is possible that protection during anhydrobiosis might occur via the stabilization of vitrifying small molecules such as sugars, but not via the direct glass transition of CAHS proteins themselves. The chain is Cytosolic-abundant heat soluble protein 86272 from Hypsibius exemplaris (Freshwater tardigrade).